A 529-amino-acid chain; its full sequence is Apolipoprotein N-acyltransferase (529 aa).

5 helical membrane-spanning segments follow: residues Val8–Ala28, Ile66–Trp86, Leu105–Ala125, Leu178–Ile198, and Gly203–Phe223. The CN hydrolase domain occupies Val242–Gly491. The active-site Proton acceptor is the Glu286. Lys350 is a catalytic residue. The Nucleophile role is filled by Cys403. Residues Tyr505–Ala525 traverse the membrane as a helical segment.

This sequence belongs to the CN hydrolase family. Apolipoprotein N-acyltransferase subfamily.

The protein localises to the cell inner membrane. The catalysed reaction is N-terminal S-1,2-diacyl-sn-glyceryl-L-cysteinyl-[lipoprotein] + a glycerophospholipid = N-acyl-S-1,2-diacyl-sn-glyceryl-L-cysteinyl-[lipoprotein] + a 2-acyl-sn-glycero-3-phospholipid + H(+). Its pathway is protein modification; lipoprotein biosynthesis (N-acyl transfer). In terms of biological role, catalyzes the phospholipid dependent N-acylation of the N-terminal cysteine of apolipoprotein, the last step in lipoprotein maturation. The sequence is that of Apolipoprotein N-acyltransferase from Agrobacterium fabrum (strain C58 / ATCC 33970) (Agrobacterium tumefaciens (strain C58)).